We begin with the raw amino-acid sequence, 222 residues long: Leucyl/phenylalanyl-tRNA--protein transferase (222 aa).

The protein belongs to the L/F-transferase family.

It is found in the cytoplasm. The enzyme catalyses N-terminal L-lysyl-[protein] + L-leucyl-tRNA(Leu) = N-terminal L-leucyl-L-lysyl-[protein] + tRNA(Leu) + H(+). It catalyses the reaction N-terminal L-arginyl-[protein] + L-leucyl-tRNA(Leu) = N-terminal L-leucyl-L-arginyl-[protein] + tRNA(Leu) + H(+). The catalysed reaction is L-phenylalanyl-tRNA(Phe) + an N-terminal L-alpha-aminoacyl-[protein] = an N-terminal L-phenylalanyl-L-alpha-aminoacyl-[protein] + tRNA(Phe). In terms of biological role, functions in the N-end rule pathway of protein degradation where it conjugates Leu, Phe and, less efficiently, Met from aminoacyl-tRNAs to the N-termini of proteins containing an N-terminal arginine or lysine. This chain is Leucyl/phenylalanyl-tRNA--protein transferase, found in Legionella pneumophila (strain Corby).